The primary structure comprises 419 residues: Acyl-coenzyme A thioesterase 1 (419 aa).

Catalysis depends on charge relay system residues serine 232, aspartate 324, and histidine 358. Phosphoserine is present on serine 416.

The protein belongs to the C/M/P thioester hydrolase family. Monomer. As to expression, expressed in liver.

It localises to the cytoplasm. Its subcellular location is the cytosol. The catalysed reaction is hexadecanoyl-CoA + H2O = hexadecanoate + CoA + H(+). It catalyses the reaction dodecanoyl-CoA + H2O = dodecanoate + CoA + H(+). It carries out the reaction tetradecanoyl-CoA + H2O = tetradecanoate + CoA + H(+). The enzyme catalyses decanoyl-CoA + H2O = decanoate + CoA + H(+). The catalysed reaction is octadecanoyl-CoA + H2O = octadecanoate + CoA + H(+). It catalyses the reaction eicosanoyl-CoA + H2O = eicosanoate + CoA + H(+). It carries out the reaction (9Z)-octadecenoyl-CoA + H2O = (9Z)-octadecenoate + CoA + H(+). The enzyme catalyses (9Z)-hexadecenoyl-CoA + H2O = (9Z)-hexadecenoate + CoA + H(+). The catalysed reaction is (9E)-octadecenoyl-CoA + H2O = (9E)-octadecenoate + CoA + H(+). The protein operates within lipid metabolism; fatty acid metabolism. Catalyzes the hydrolysis of acyl-CoAs into free fatty acids and coenzyme A (CoASH), regulating their respective intracellular levels. More active towards saturated and unsaturated long chain fatty acyl-CoAs (C12-C20). In Rattus norvegicus (Rat), this protein is Acyl-coenzyme A thioesterase 1 (Acot1).